Reading from the N-terminus, the 543-residue chain is Exodeoxyribonuclease 7 large subunit (543 aa).

Residues 498 to 543 (VTGEGDKASPPPQAASATTTPAPGRPNPLPKSPKKSEPPAGQGSLF) form a disordered region.

The protein belongs to the XseA family. As to quaternary structure, heterooligomer composed of large and small subunits.

The protein resides in the cytoplasm. The catalysed reaction is Exonucleolytic cleavage in either 5'- to 3'- or 3'- to 5'-direction to yield nucleoside 5'-phosphates.. Bidirectionally degrades single-stranded DNA into large acid-insoluble oligonucleotides, which are then degraded further into small acid-soluble oligonucleotides. In Allorhizobium ampelinum (strain ATCC BAA-846 / DSM 112012 / S4) (Agrobacterium vitis (strain S4)), this protein is Exodeoxyribonuclease 7 large subunit.